The following is a 440-amino-acid chain: Endoglucanase B (440 aa).

An N-terminal signal peptide occupies residues 1–33 (MNKRLSRGKISLLASVFVTTTFMGGVNVLASTA). Glu-179 functions as the Proton donor in the catalytic mechanism. Residue Glu-305 is the Nucleophile of the active site. Positions 381-440 (TSYSLGDVNKDGKVNAIDYAVLKSILLGTNTNVDLSVSDMNKDGKVNALDLAVLKKMLLS) constitute a Dockerin domain.

It belongs to the glycosyl hydrolase 5 (cellulase A) family.

The catalysed reaction is Endohydrolysis of (1-&gt;4)-beta-D-glucosidic linkages in cellulose, lichenin and cereal beta-D-glucans.. It catalyses the reaction Endohydrolysis of (1-&gt;4)-beta-D-xylosidic linkages in xylans.. Its function is as follows. Has endoglucanase activity on carboxymethyl-cellulose (CMC), xylan and lichenan, but not Avicel. The polypeptide is Endoglucanase B (engB) (Clostridium cellulovorans (strain ATCC 35296 / DSM 3052 / OCM 3 / 743B)).